A 139-amino-acid chain; its full sequence is Large ribosomal subunit protein uL13 (139 aa).

The protein belongs to the universal ribosomal protein uL13 family. In terms of assembly, part of the 50S ribosomal subunit.

In terms of biological role, this protein is one of the early assembly proteins of the 50S ribosomal subunit, although it is not seen to bind rRNA by itself. It is important during the early stages of 50S assembly. In Methanococcoides burtonii (strain DSM 6242 / NBRC 107633 / OCM 468 / ACE-M), this protein is Large ribosomal subunit protein uL13.